Here is a 261-residue protein sequence, read N- to C-terminus: uncharacterized protein (261 aa).

A coiled-coil region spans residues 16–147; it reads KQTSLVLQNL…QTNVNVLRSQ (132 aa).

Its subcellular location is the cytoplasm. This is an uncharacterized protein from Schizosaccharomyces pombe (strain 972 / ATCC 24843) (Fission yeast).